A 505-amino-acid chain; its full sequence is 4-trimethylaminobutyraldehyde dehydrogenase (505 aa).

Residues lysine 191 and 243-247 (GSVPT) contribute to the NAD(+) site. Glutamate 265 acts as the Proton acceptor in catalysis. The active-site Nucleophile is cysteine 299. Glutamate 402 lines the NAD(+) pocket.

It belongs to the aldehyde dehydrogenase family. As to quaternary structure, homotetramer. In terms of tissue distribution, constitutively expressed in all organs tested: brain, eye, gill, GI, heart, liver, kidney, muscle, skin, testis and ovary.

The protein resides in the cytoplasm. Its subcellular location is the cytosol. The catalysed reaction is 4-(trimethylamino)butanal + NAD(+) + H2O = 4-(trimethylamino)butanoate + NADH + 2 H(+). It catalyses the reaction an aldehyde + NAD(+) + H2O = a carboxylate + NADH + 2 H(+). It functions in the pathway amine and polyamine biosynthesis; carnitine biosynthesis. Functionally, converts gamma-trimethylaminobutyraldehyde into gamma-butyrobetaine with high efficiency (in vitro). Can catalyze the irreversible oxidation of a broad range of aldehydes to the corresponding acids in an NAD-dependent reaction, but with low efficiency. In Oryzias latipes (Japanese rice fish), this protein is 4-trimethylaminobutyraldehyde dehydrogenase (aldh9A1).